We begin with the raw amino-acid sequence, 530 residues long: Structure-specific endonuclease subunit SLX1 homolog 2 (530 aa).

One can recognise a GIY-YIG domain in the interval 4-89; the sequence is RFHCVYLLTS…PTKSTRLKTQ (86 aa). An SLX1-type zinc finger spans residues 232–365; that stretch reads CALCSLPLRS…PSQPCPCPLC (134 aa). 3 disordered regions span residues 276–306, 410–438, and 474–502; these read ATMG…MDAH, NSSL…YCGD, and LPPS…RMTD. A compositionally biased stretch (basic and acidic residues) spans 283-298; the sequence is RNERSGEYSNKIKDDS.

The protein belongs to the SLX1 family. Forms a heterodimer with a member of the SLX4 family. It depends on a divalent metal cation as a cofactor.

It localises to the nucleus. Its function is as follows. Catalytic subunit of a heterodimeric structure-specific endonuclease that resolves DNA secondary structures generated during DNA repair and recombination. Has endonuclease activity towards branched DNA substrates, introducing single-strand cuts in duplex DNA close to junctions with ss-DNA. This Trypanosoma cruzi (strain CL Brener) protein is Structure-specific endonuclease subunit SLX1 homolog 2.